The following is a 292-amino-acid chain: BTB/POZ domain-containing protein KCTD7 (292 aa).

Residues 1-27 (MVVFSAASDSEKPGDAMSGADKGEEEY) form a disordered region. A BTB domain is found at 56 to 144 (IPLNVGGTYF…YAIGPLLENL (89 aa)).

It is found in the cell membrane. The protein localises to the cytoplasm. It localises to the cytosol. In Danio rerio (Zebrafish), this protein is BTB/POZ domain-containing protein KCTD7 (kctd7).